Here is a 298-residue protein sequence, read N- to C-terminus: Ethylmalonyl-CoA decarboxylase (298 aa).

Belongs to the enoyl-CoA hydratase/isomerase family.

It is found in the cytoplasm. The protein localises to the cytosol. The catalysed reaction is (2S)-ethylmalonyl-CoA + H(+) = butanoyl-CoA + CO2. The enzyme catalyses (S)-methylmalonyl-CoA + H(+) = propanoyl-CoA + CO2. It carries out the reaction (2R)-ethylmalonyl-CoA + H(+) = butanoyl-CoA + CO2. Decarboxylates ethylmalonyl-CoA, a potentially toxic metabolite, to form butyryl-CoA, suggesting it might be involved in metabolite proofreading. Acts preferentially on (S)-ethylmalonyl-CoA but also has some activity on the (R)-isomer. Also has methylmalonyl-CoA decarboxylase activity at lower level. In Gallus gallus (Chicken), this protein is Ethylmalonyl-CoA decarboxylase (ECHDC1).